The chain runs to 442 residues: Cytokine receptor-like factor 3 (442 aa).

Residues 10–46 (EVLLQEARENVEAAQSYRRELGQRLQGLREAQRQIKE) adopt a coiled-coil conformation. In terms of domain architecture, Fibronectin type-III spans 181 to 274 (PPVQIEELIE…PQTGHSTLVP (94 aa)).

This sequence belongs to the cytokine receptor-like factor 3 family.

It is found in the cytoplasm. In terms of biological role, may play a role in the negative regulation of cell cycle progression. The polypeptide is Cytokine receptor-like factor 3 (Crlf3) (Mus musculus (Mouse)).